The following is a 127-amino-acid chain: Small ribosomal subunit protein uS12 (127 aa).

Aspartate 89 carries the post-translational modification 3-methylthioaspartic acid. The segment at 102-127 (LDTAGVKDRKQGRSKYGTKRPKEAKK) is disordered. Basic residues predominate over residues 113 to 127 (GRSKYGTKRPKEAKK).

The protein belongs to the universal ribosomal protein uS12 family. Part of the 30S ribosomal subunit. Contacts proteins S8 and S17. May interact with IF1 in the 30S initiation complex.

Its function is as follows. With S4 and S5 plays an important role in translational accuracy. In terms of biological role, interacts with and stabilizes bases of the 16S rRNA that are involved in tRNA selection in the A site and with the mRNA backbone. Located at the interface of the 30S and 50S subunits, it traverses the body of the 30S subunit contacting proteins on the other side and probably holding the rRNA structure together. The combined cluster of proteins S8, S12 and S17 appears to hold together the shoulder and platform of the 30S subunit. The protein is Small ribosomal subunit protein uS12 of Nostoc punctiforme (strain ATCC 29133 / PCC 73102).